Here is a 249-residue protein sequence, read N- to C-terminus: Probable transcriptional regulatory protein OTT_1378 (249 aa).

Belongs to the TACO1 family.

Its subcellular location is the cytoplasm. The polypeptide is Probable transcriptional regulatory protein OTT_1378 (Orientia tsutsugamushi (strain Ikeda) (Rickettsia tsutsugamushi)).